Consider the following 451-residue polypeptide: tRNA-2-methylthio-N(6)-dimethylallyladenosine synthase (451 aa).

One can recognise an MTTase N-terminal domain in the interval 6 to 122 (RHYHITTFGC…LQDLLEQVFN (117 aa)). [4Fe-4S] cluster is bound by residues cysteine 15, cysteine 51, cysteine 85, cysteine 157, cysteine 161, and cysteine 164. In terms of domain architecture, Radical SAM core spans 143–380 (RDSKITAWVN…NHLVGVKAAD (238 aa)). The TRAM domain maps to 383 to 447 (QRYMGRIEEV…PFSLTGEVKE (65 aa)).

This sequence belongs to the methylthiotransferase family. MiaB subfamily. As to quaternary structure, monomer. Requires [4Fe-4S] cluster as cofactor.

The protein resides in the cytoplasm. The enzyme catalyses N(6)-dimethylallyladenosine(37) in tRNA + (sulfur carrier)-SH + AH2 + 2 S-adenosyl-L-methionine = 2-methylsulfanyl-N(6)-dimethylallyladenosine(37) in tRNA + (sulfur carrier)-H + 5'-deoxyadenosine + L-methionine + A + S-adenosyl-L-homocysteine + 2 H(+). Functionally, catalyzes the methylthiolation of N6-(dimethylallyl)adenosine (i(6)A), leading to the formation of 2-methylthio-N6-(dimethylallyl)adenosine (ms(2)i(6)A) at position 37 in tRNAs that read codons beginning with uridine. This chain is tRNA-2-methylthio-N(6)-dimethylallyladenosine synthase, found in Trichodesmium erythraeum (strain IMS101).